The primary structure comprises 264 residues: 3-methyl-2-oxobutanoate hydroxymethyltransferase (264 aa).

2 residues coordinate Mg(2+): Asp45 and Asp84. 3-methyl-2-oxobutanoate contacts are provided by residues 45–46, Asp84, and Lys112; that span reads DS. Residue Glu114 participates in Mg(2+) binding. Glu181 acts as the Proton acceptor in catalysis.

The protein belongs to the PanB family. As to quaternary structure, homodecamer; pentamer of dimers. Requires Mg(2+) as cofactor.

The protein localises to the cytoplasm. The enzyme catalyses 3-methyl-2-oxobutanoate + (6R)-5,10-methylene-5,6,7,8-tetrahydrofolate + H2O = 2-dehydropantoate + (6S)-5,6,7,8-tetrahydrofolate. It functions in the pathway cofactor biosynthesis; (R)-pantothenate biosynthesis; (R)-pantoate from 3-methyl-2-oxobutanoate: step 1/2. In terms of biological role, catalyzes the reversible reaction in which hydroxymethyl group from 5,10-methylenetetrahydrofolate is transferred onto alpha-ketoisovalerate to form ketopantoate. The protein is 3-methyl-2-oxobutanoate hydroxymethyltransferase of Escherichia coli O17:K52:H18 (strain UMN026 / ExPEC).